The sequence spans 226 residues: uncharacterized protein (226 aa).

The ABC transporter domain occupies 4 to 226; that stretch reads LQFQQVGYWY…FTVKENVAVV (223 aa). 38-45 provides a ligand contact to ATP; that stretch reads GTSGTGKT.

It belongs to the ABC transporter superfamily.

This is an uncharacterized protein from Bacillus subtilis (strain 168).